A 250-amino-acid chain; its full sequence is Putative ankyrin repeat protein RBE_0623 (250 aa).

ANK repeat units lie at residues Ile70–Thr99, Asn104–Glu134, and Gly137–Phe166.

This is Putative ankyrin repeat protein RBE_0623 from Rickettsia bellii (strain RML369-C).